A 143-amino-acid chain; its full sequence is Transcriptional regulator MraZ (143 aa).

SpoVT-AbrB domains lie at 5–47 (EYHH…PIEE) and 76–119 (AMES…SAER).

This sequence belongs to the MraZ family. As to quaternary structure, forms oligomers.

It localises to the cytoplasm. The protein localises to the nucleoid. The chain is Transcriptional regulator MraZ from Lactobacillus johnsonii (strain CNCM I-12250 / La1 / NCC 533).